We begin with the raw amino-acid sequence, 318 residues long: NADH-ubiquinone oxidoreductase chain 1 (318 aa).

8 consecutive transmembrane segments (helical) span residues 2–22 (FMIN…FLTL), 70–90 (MFII…SPLP), 100–120 (LGVL…LWSG), 136–156 (VAQT…VLLM), 172–192 (LWLL…TLAE), 222–242 (LFFL…AILF), 253–273 (ELYT…FLWI), and 294–314 (LPLT…TASI).

This sequence belongs to the complex I subunit 1 family. Core subunit of respiratory chain NADH dehydrogenase (Complex I) which is composed of 45 different subunits.

The protein localises to the mitochondrion inner membrane. It catalyses the reaction a ubiquinone + NADH + 5 H(+)(in) = a ubiquinol + NAD(+) + 4 H(+)(out). Functionally, core subunit of the mitochondrial membrane respiratory chain NADH dehydrogenase (Complex I) which catalyzes electron transfer from NADH through the respiratory chain, using ubiquinone as an electron acceptor. Essential for the catalytic activity and assembly of complex I. The protein is NADH-ubiquinone oxidoreductase chain 1 (MT-ND1) of Balaenoptera physalus (Fin whale).